Here is a 151-residue protein sequence, read N- to C-terminus: MKVILLKDVAKLGKKGEIKEVSDGYGRNYLIPRGLAVEATKSELSKLKNIEDQKKKKEERTKANSEELLRKIKQRHFRMKVKAGASGKLFGAVTSADIAELIAKELGTEFSKRYVDLKENIKNTGEYKVNLKLPGNVKGSIIIAIEKSEED.

Belongs to the bacterial ribosomal protein bL9 family.

Its function is as follows. Binds to the 23S rRNA. This chain is Large ribosomal subunit protein bL9, found in Kosmotoga olearia (strain ATCC BAA-1733 / DSM 21960 / TBF 19.5.1).